The chain runs to 289 residues: Sphingomyelinase D (289 aa).

The first 22 residues, 1–22 (MQSISVLICVLLALSILNFTVA), serve as a signal peptide directing secretion. His34 is a catalytic residue. Mg(2+) is bound by residues Glu54, Asp56, and Asp103. The SMD-tail motif lies at 282-289 (ATEDDAPW).

This sequence belongs to the sphingomyelinase D/phospholipase D family. Mg(2+) is required as a cofactor.

The protein localises to the secreted. The catalysed reaction is a sphingomyelin + H2O = an N-acylsphing-4-enine 1-phosphate + choline + H(+). With respect to regulation, sphingomyelinase activity is reduced by 33 percent following addition of EDTA. In terms of biological role, catalyzes the hydrolysis of sphingomyelin. Sphingomyelinases D are produced by some spider in their venoms, but also by arthropods such as ticks, or pathogenic bacteria and fungi. They might play a role in pathogenicity through different mechanisms, such as membrane destabilization and host cell penetration, but also pulmonary inflammation and cutaneous lesions. In Aspergillus flavus (strain ATCC 200026 / FGSC A1120 / IAM 13836 / NRRL 3357 / JCM 12722 / SRRC 167), this protein is Sphingomyelinase D.